A 49-amino-acid chain; its full sequence is Small ribosomal subunit protein uS19c (49 aa).

Belongs to the universal ribosomal protein uS19 family.

The protein resides in the plastid. It is found in the chloroplast. Its function is as follows. Protein S19 forms a complex with S13 that binds strongly to the 16S ribosomal RNA. The polypeptide is Small ribosomal subunit protein uS19c (rps19) (Sinapis alba (White mustard)).